Here is a 104-residue protein sequence, read N- to C-terminus: Pterin-4-alpha-carbinolamine dehydratase (104 aa).

Position 2 is an N-acetylalanine (Ala2). Substrate is bound by residues 61 to 63 (DHH) and 78 to 81 (STHE).

Belongs to the pterin-4-alpha-carbinolamine dehydratase family. As to quaternary structure, homotetramer and homodimer. Heterotetramer with HNF1A; formed by a dimer of dimers. Interacts with HNF1B (via HNF-p1 domain); the interaction increases HNF1B transactivation activity.

It localises to the cytoplasm. It is found in the nucleus. It carries out the reaction (4aS,6R)-4a-hydroxy-L-erythro-5,6,7,8-tetrahydrobiopterin = (6R)-L-erythro-6,7-dihydrobiopterin + H2O. Its function is as follows. Involved in tetrahydrobiopterin biosynthesis. Seems to both prevent the formation of 7-pterins and accelerate the formation of quinonoid-BH2. Coactivator for HNF1A-dependent transcription. Regulates the dimerization of homeodomain protein HNF1A and enhances its transcriptional activity. Also acts as a coactivator for HNF1B-dependent transcription. This is Pterin-4-alpha-carbinolamine dehydratase (PCBD1) from Bos taurus (Bovine).